The chain runs to 286 residues: Type II restriction enzyme NgoMIV (286 aa).

2 residues coordinate Mg(2+): aspartate 140 and cysteine 186.

In terms of assembly, homotetramer. The cofactor is Mg(2+).

It catalyses the reaction Endonucleolytic cleavage of DNA to give specific double-stranded fragments with terminal 5'-phosphates.. A P subtype restriction enzyme that recognizes the double-stranded sequence 5'-GCCGGC-3' and cleaves after G-1. In Neisseria gonorrhoeae, this protein is Type II restriction enzyme NgoMIV (ngoMIVR).